The chain runs to 319 residues: Na(+)-translocating NADH-quinone reductase subunit C (319 aa).

Residues 14–34 form a helical membrane-spanning segment; it reads WYVILFIFALSLFSSVFLSTV. FMN phosphoryl threonine is present on threonine 283.

It belongs to the NqrC family. As to quaternary structure, composed of six subunits; NqrA, NqrB, NqrC, NqrD, NqrE and NqrF. It depends on FMN as a cofactor.

The protein localises to the cell inner membrane. The enzyme catalyses a ubiquinone + n Na(+)(in) + NADH + H(+) = a ubiquinol + n Na(+)(out) + NAD(+). NQR complex catalyzes the reduction of ubiquinone-1 to ubiquinol by two successive reactions, coupled with the transport of Na(+) ions from the cytoplasm to the periplasm. NqrA to NqrE are probably involved in the second step, the conversion of ubisemiquinone to ubiquinol. This chain is Na(+)-translocating NADH-quinone reductase subunit C, found in Chlamydia caviae (strain ATCC VR-813 / DSM 19441 / 03DC25 / GPIC) (Chlamydophila caviae).